Consider the following 889-residue polypeptide: DNA gyrase subunit A (889 aa).

The Topo IIA-type catalytic domain maps to 35–501 (LPDVRDGLKP…GFEDLEDEDL (467 aa)). Tyrosine 123 (O-(5'-phospho-DNA)-tyrosine intermediate) is an active-site residue. Residues 528–534 (QNRGGRG) carry the GyrA-box motif. Residues 811–889 (KEDAEDETNE…IQQSLDEDEE (79 aa)) are disordered. Residues 813–823 (DAEDETNEDEQ) are compositionally biased toward acidic residues. Over residues 863–875 (DGRIEVRQDFMDR) the composition is skewed to basic and acidic residues. Acidic residues predominate over residues 876–889 (VEEDIQQSLDEDEE).

It belongs to the type II topoisomerase GyrA/ParC subunit family. As to quaternary structure, heterotetramer, composed of two GyrA and two GyrB chains. In the heterotetramer, GyrA contains the active site tyrosine that forms a transient covalent intermediate with DNA, while GyrB binds cofactors and catalyzes ATP hydrolysis.

The protein localises to the cytoplasm. The enzyme catalyses ATP-dependent breakage, passage and rejoining of double-stranded DNA.. Its function is as follows. A type II topoisomerase that negatively supercoils closed circular double-stranded (ds) DNA in an ATP-dependent manner to modulate DNA topology and maintain chromosomes in an underwound state. Negative supercoiling favors strand separation, and DNA replication, transcription, recombination and repair, all of which involve strand separation. Also able to catalyze the interconversion of other topological isomers of dsDNA rings, including catenanes and knotted rings. Type II topoisomerases break and join 2 DNA strands simultaneously in an ATP-dependent manner. The protein is DNA gyrase subunit A of Staphylococcus aureus.